Here is a 1160-residue protein sequence, read N- to C-terminus: Large proline-rich protein BAG6 (1160 aa).

One can recognise a Ubiquitin-like domain in the interval Ile-7 to Ser-82. Disordered regions lie at residues Glu-76–Ser-114, Glu-206–Pro-261, Ile-367–Thr-422, Ala-478–Gln-547, Gly-563–Ala-628, Ser-672–Leu-711, Ser-962–Trp-1038, and Tyr-1126–Ala-1160. Gly residues predominate over residues Pro-85 to Gly-94. Low complexity-rich tracts occupy residues Ser-95–Ala-110 and Ser-223–Asp-233. Composition is skewed to polar residues over residues Gln-247–Asn-257 and Leu-371–Gly-417. Composition is skewed to low complexity over residues Ala-478–Gln-495 and Thr-566–Ser-614. Residues Phe-677–Pro-698 are compositionally biased toward pro residues. Residues Ala-699–Ala-708 show a composition bias toward low complexity. Over residues Ser-1132–His-1146 the composition is skewed to basic and acidic residues.

As to quaternary structure, component of the bag6/bat3 complex.

The protein resides in the cytoplasm. It is found in the cytosol. The protein localises to the nucleus. It localises to the secreted. Its subcellular location is the extracellular exosome. In terms of biological role, ATP-independent molecular chaperone preventing the aggregation of misfolded and hydrophobic patches-containing proteins. Functions as part of a cytosolic protein quality control complex, the bag6/bat3 complex, which maintains these client proteins in a soluble state and participates in their proper delivery to the endoplasmic reticulum or alternatively can promote their sorting to the proteasome where they undergo degradation. The bag6/bat3 complex is involved in the post-translational delivery of tail-anchored/type II transmembrane proteins to the endoplasmic reticulum membrane. Similarly, the bag6/bat3 complex also functions as a sorting platform for proteins of the secretory pathway that are mislocalized to the cytosol either delivering them to the proteasome for degradation or to the endoplasmic reticulum. The bag6/bat3 complex also plays a role in the endoplasmic reticulum-associated degradation (ERAD), a quality control mechanism that eliminates unwanted proteins of the endoplasmic reticulum through their retrotranslocation to the cytosol and their targeting to the proteasome. It maintains these retrotranslocated proteins in an unfolded yet soluble state condition in the cytosol to ensure their proper delivery to the proteasome. Also required for selective ubiquitin-mediated degradation of defective nascent chain polypeptides by the proteasome. Also involved in endoplasmic reticulum stress-induced pre-emptive quality control, a mechanism that selectively attenuates the translocation of newly synthesized proteins into the endoplasmic reticulum and reroutes them to the cytosol for proteasomal degradation. May ensure the proper degradation of these proteins and thereby protects the endoplasmic reticulum from protein overload upon stress. By stabilizing a large spectrum of proteins, may indirectly affect different biological processes including apoptosis. By controlling the steady-state expression of the IGF1R receptor, indirectly regulates the insulin-like growth factor receptor signaling pathway. Functionally, when nuclear, may also act as a component of some chromatin regulator complex. This chain is Large proline-rich protein BAG6, found in Danio rerio (Zebrafish).